We begin with the raw amino-acid sequence, 461 residues long: Argininosuccinate lyase (461 aa).

The protein belongs to the lyase 1 family. Argininosuccinate lyase subfamily.

It localises to the cytoplasm. It catalyses the reaction 2-(N(omega)-L-arginino)succinate = fumarate + L-arginine. It functions in the pathway amino-acid biosynthesis; L-arginine biosynthesis; L-arginine from L-ornithine and carbamoyl phosphate: step 3/3. The chain is Argininosuccinate lyase from Trichormus variabilis (strain ATCC 29413 / PCC 7937) (Anabaena variabilis).